Reading from the N-terminus, the 250-residue chain is MGKLLLILGSVIALPTFAAGGGDLDASDYTGVSFWLVTAALLASTVFFFVERDRVSAKWKTSLTVSGLVTGIAFWHYMYMRGVWIETGDSPTVFRYIDWLLTVPLLICEFYLILAAATNVAGSLFKKLLVGSLVMLVFGYMGEAGIMAAWPAFIIGCLAWVYMIYELWAGEGKSACNTASPAVQSAYNTMMYIIIFGWAIYPVGYFTGYLMGDGGSALNLNLIYNLADFVNKILFGLIIWNVAVKESSNA.

An N-terminal signal peptide occupies residues 1–18; it reads MGKLLLILGSVIALPTFA. Topologically, residues 19-29 are extracellular; that stretch reads AGGGDLDASDY. Residues 30–53 form a helical membrane-spanning segment; it reads TGVSFWLVTAALLASTVFFFVERD. Residues 54–58 are Cytoplasmic-facing; the sequence is RVSAK. Residues 59–87 form a helical membrane-spanning segment; the sequence is WKTSLTVSGLVTGIAFWHYMYMRGVWIET. Residues 88 to 90 lie on the Extracellular side of the membrane; that stretch reads GDS. A helical transmembrane segment spans residues 91 to 118; that stretch reads PTVFRYIDWLLTVPLLICEFYLILAAAT. The Cytoplasmic portion of the chain corresponds to 119 to 121; sequence NVA. Residues 122–144 form a helical membrane-spanning segment; that stretch reads GSLFKKLLVGSLVMLVFGYMGEA. Residues 145–147 are Extracellular-facing; it reads GIM. The chain crosses the membrane as a helical span at residues 148-177; sequence AAWPAFIIGCLAWVYMIYELWAGEGKSACN. The Cytoplasmic segment spans residues 178 to 180; it reads TAS. Residues 181–208 traverse the membrane as a helical segment; it reads PAVQSAYNTMMYIIIFGWAIYPVGYFTG. The Extracellular segment spans residues 209–218; the sequence is YLMGDGGSAL. A helical membrane pass occupies residues 219-249; it reads NLNLIYNLADFVNKILFGLIIWNVAVKESSN. Position 232 is an N6-(retinylidene)lysine (Lys-232). A topological domain (cytoplasmic) is located at residue Ala-250.

It belongs to the archaeal/bacterial/fungal opsin family. Homopentamer. GPR protomers assemble into a pentamer around a central pore with a C5 symmetry axis. In terms of processing, contains one covalently linked retinal chromophore per subunit.

The protein localises to the cell membrane. Light-driven proton pump. This is Green-light absorbing proteorhodopsin from Unknown prokaryotic organism.